The primary structure comprises 264 residues: Probable pectate lyase D (264 aa).

Positions 1–17 are cleaved as a signal peptide; it reads MFFKQLAVLSFATSALA. N60 carries N-linked (GlcNAc...) asparagine glycosylation. Positions 234-264 are disordered; the sequence is YEGTDNNDEEPQEISTGPSNACQYTDPLPSC. Residues 235–245 are compositionally biased toward acidic residues; sequence EGTDNNDEEPQ. The span at 246–256 shows a compositional bias: polar residues; sequence EISTGPSNACQ.

This sequence belongs to the polysaccharide lyase 3 family. Ca(2+) serves as cofactor.

The protein resides in the secreted. It catalyses the reaction Eliminative cleavage of (1-&gt;4)-alpha-D-galacturonan to give oligosaccharides with 4-deoxy-alpha-D-galact-4-enuronosyl groups at their non-reducing ends.. Pectinolytic enzyme consist of four classes of enzymes: pectin lyase, polygalacturonase, pectin methylesterase and rhamnogalacturonase. Among pectinolytic enzymes, pectin lyase is the most important in depolymerization of pectin, since it cleaves internal glycosidic bonds of highly methylated pectins. Favors pectate, the anion, over pectin, the methyl ester. This Emericella nidulans (strain FGSC A4 / ATCC 38163 / CBS 112.46 / NRRL 194 / M139) (Aspergillus nidulans) protein is Probable pectate lyase D (plyD).